The primary structure comprises 297 residues: Oxidoreductase R1 (297 aa).

It belongs to the asaB hydroxylase/desaturase family.

The protein operates within secondary metabolite biosynthesis. Functionally, oxidoreductase; part of the gene cluster that mediates the biosynthesis of squalestatin S1 (SQS1, also known as zaragozic acid A), a heavily oxidized fungal polyketide that offers potent cholesterol lowering activity by targeting squalene synthase (SS). SQS1 is composed of a 2,8-dioxobicyclic[3.2.1]octane-3,4,5-tricarboxyclic acid core that is connected to two lipophilic polyketide arms. These initial steps feature the priming of an unusual benzoic acid starter unit onto the highly reducing polyketide synthase pks2, followed by oxaloacetate extension and product release to generate a tricarboxylic acid containing product. The phenylalanine ammonia lyase (PAL) M7 and the acyl-CoA ligase M9 are involved in transforming phenylalanine into benzoyl-CoA. The citrate synthase-like protein R3 is involved in connecting the C-alpha-carbons of the hexaketide chain and oxaloacetate to afford the tricarboxylic acid unit. The potential hydrolytic enzymes, M8 and M10, are in close proximity to pks2 and may participate in product release. On the other side, the tetraketide arm is synthesized by a the squalestatin tetraketide synthase pks1 and enzymatically esterified to the core in the last biosynthetic step, by the acetyltransferase M4. The biosynthesis of the tetraketide must involve 3 rounds of chain extension. After the first and second rounds methyl-transfer occurs, and in all rounds of extension the ketoreductase and dehydratase are active. The enoyl reductase and C-MeT of pks1 are not active in the final round of extension. The acetyltransferase M4 appears to have a broad substrate selectivity for its acyl CoA substrate, allowing the in vitro synthesis of novel squalestatins. The biosynthesis of SQS1 requires several oxidative steps likely performed by oxidoreductases M1, R1 and R2. Finally, in support of the identification of the cluster as being responsible for SQS1 production, the cluster contains a gene encoding a putative squalene synthase (SS) R6, suggesting a likely mechanism for self-resistance. The chain is Oxidoreductase R1 from Phoma sp. (strain ATCC 20986 / MF5453).